A 69-amino-acid polypeptide reads, in one-letter code: Large ribosomal subunit protein bL31 (69 aa).

The Zn(2+) site is built by C17, C19, C37, and C40.

It belongs to the bacterial ribosomal protein bL31 family. Type A subfamily. As to quaternary structure, part of the 50S ribosomal subunit. Zn(2+) serves as cofactor.

In terms of biological role, binds the 23S rRNA. The sequence is that of Large ribosomal subunit protein bL31 from Caldicellulosiruptor bescii (strain ATCC BAA-1888 / DSM 6725 / KCTC 15123 / Z-1320) (Anaerocellum thermophilum).